The primary structure comprises 211 residues: Large ribosomal subunit protein bL25 (211 aa).

This sequence belongs to the bacterial ribosomal protein bL25 family. CTC subfamily. In terms of assembly, part of the 50S ribosomal subunit; part of the 5S rRNA/L5/L18/L25 subcomplex. Contacts the 5S rRNA. Binds to the 5S rRNA independently of L5 and L18.

Its function is as follows. This is one of the proteins that binds to the 5S RNA in the ribosome where it forms part of the central protuberance. This Xanthomonas axonopodis pv. citri (strain 306) protein is Large ribosomal subunit protein bL25.